We begin with the raw amino-acid sequence, 199 residues long: Putative 3-methyladenine DNA glycosylase (199 aa).

The protein belongs to the DNA glycosylase MPG family.

This chain is Putative 3-methyladenine DNA glycosylase, found in Rhizobium etli (strain ATCC 51251 / DSM 11541 / JCM 21823 / NBRC 15573 / CFN 42).